The primary structure comprises 736 residues: Oxysterol-binding protein-related protein 9 (736 aa).

Ala2 carries the N-acetylalanine modification. The PH domain maps to 2–99 (ASIVEGPLSK…WIHALEETIL (98 aa)). The segment at 209 to 368 (LEPVISTMPS…RDDDGEAGSV (160 aa)) is disordered. Over residues 253–274 (TPTPNSTGSGNSPPSSSLTPPS) the composition is skewed to low complexity. A phosphoserine mark is found at Ser306, Ser324, Ser325, Ser326, and Ser329. 2 stretches are compositionally biased toward polar residues: residues 314–329 (SSGS…SGNS) and 336–348 (TESL…NGTS). Ser611 is modified (phosphoserine).

Belongs to the OSBP family. In terms of assembly, heterodimer with OSBPL11. Interacts with OSBPL10.

Its subcellular location is the late endosome membrane. It localises to the golgi apparatus. The protein localises to the trans-Golgi network membrane. The catalysed reaction is a 1,2-diacyl-sn-glycero-3-phospho-(1D-myo-inositol 4-phosphate)(out) + a 1,2-diacyl-sn-glycero-3-phospho-L-serine(in) = a 1,2-diacyl-sn-glycero-3-phospho-(1D-myo-inositol 4-phosphate)(in) + a 1,2-diacyl-sn-glycero-3-phospho-L-serine(out). In terms of biological role, interacts with OSBPL11 to function as lipid transfer proteins. Together they form a heterodimer that localizes at the ER-trans-Golgi membrane contact sites, and exchanges phosphatidylserine (1,2-diacyl-sn-glycero-3-phospho-L-serine, PS) for phosphatidylinositol-4-phosphate (1,2-diacyl-sn-glycero-3-phospho-(1D-myo-inositol 4-phosphate), PI(4)P) between the two organelles, a step that is critical for sphingomyelin synthesis in the Golgi complex. The chain is Oxysterol-binding protein-related protein 9 (Osbpl9) from Mus musculus (Mouse).